Reading from the N-terminus, the 221-residue chain is uncharacterized protein (221 aa).

Composition is skewed to low complexity over residues 1 to 27 (MNNNNNNNNNNNNNNNNNNNNNNNNNN) and 140 to 162 (TTTSSTTTTTTTTSTTTTNNSSS). 2 disordered regions span residues 1 to 28 (MNNNNNNNNNNNNNNNNNNNNNNNNNNE) and 140 to 205 (TTTS…NIGG).

This is an uncharacterized protein from Dictyostelium discoideum (Social amoeba).